A 65-amino-acid polypeptide reads, in one-letter code: Large ribosomal subunit protein uL30 (65 aa).

This sequence belongs to the universal ribosomal protein uL30 family. In terms of assembly, part of the 50S ribosomal subunit.

The sequence is that of Large ribosomal subunit protein uL30 from Aster yellows witches'-broom phytoplasma (strain AYWB).